Reading from the N-terminus, the 332-residue chain is Adenosine receptor A2b (332 aa).

At 1-8 the chain is on the extracellular side; the sequence is MPLEAQDA. The helical transmembrane segment at 9–33 threads the bilayer; it reads VYVALELALAALSVTGNVLVCAAVG. Residues 34-43 lie on the Cytoplasmic side of the membrane; it reads TSSALQTPTN. Residues 44–67 form a helical membrane-spanning segment; that stretch reads YFLVSLAAADVAVGLFAIPFAVTI. Topologically, residues 68–78 are extracellular; the sequence is SLGFCTDFHSC. Cysteines 78 and 170 form a disulfide. Residues 79–101 form a helical membrane-spanning segment; it reads LFLACFVLVLTQSSIFSLLAVAV. Residues 102 to 121 lie on the Cytoplasmic side of the membrane; the sequence is DRYLAVRVPLRYKSLVTGAR. Residues 122-144 form a helical membrane-spanning segment; it reads ARGVIAALWVLAFGIGLTPFLGW. Over 145–177 the chain is Extracellular; that stretch reads NDRKIATNCTEPGDAATNVSCCLIRCLFENVVP. 2 N-linked (GlcNAc...) asparagine glycosylation sites follow: Asn152 and Asn162. An adenosine-binding site is contributed by Glu173. Residues 178–202 traverse the membrane as a helical segment; the sequence is MSYMVYFNFFGCVLPPLLIMLVIYV. Residues 203 to 234 lie on the Cytoplasmic side of the membrane; the sequence is KIFLVACRQLQRTELMDHSRTVLQREIHAAKS. The helical transmembrane segment at 235–258 threads the bilayer; the sequence is LALIVGIFALCWLPVHTINCASLF. An adenosine-binding site is contributed by Asn253. The Extracellular portion of the chain corresponds to 259 to 266; the sequence is QPTWAKVK. A helical membrane pass occupies residues 267 to 290; sequence PKWAINTAILLSHANSAVNPIVYA. 2 residues coordinate adenosine: Ser278 and His279. Over 291 to 332 the chain is Cytoplasmic; sequence YRNRDFRYTFHKIISRYILCRTHILKSGEGQVGSQPTLQLGL. Cys310 is lipidated: S-palmitoyl cysteine.

The protein belongs to the G-protein coupled receptor 1 family.

The protein resides in the cell membrane. Receptor for adenosine. The activity of this receptor is mediated by G proteins which activate adenylyl cyclase. The protein is Adenosine receptor A2b (ADORA2B) of Bos taurus (Bovine).